The following is a 708-amino-acid chain: Leukotoxin translocation ATP-binding protein LktB (708 aa).

Residues 1–126 form the Peptidase C39 domain; the sequence is MEANHQRNDL…ACYQGQLILV (126 aa). An ABC transmembrane type-1 domain is found at 155–437; it reads FLETLIVSIF…LAQLWQDFQQ (283 aa). Helical transmembrane passes span 159–179, 192–212, 270–290, 296–316, and 389–409; these read LIVS…FQVV, LNII…LSGL, ALTS…MWYY, LVIL…SPIL, and VMVI…LSIG. One can recognise an ABC transporter domain in the interval 469-704; that stretch reads ISFKNIRFRY…SNGLYSYLHQ (236 aa). An ATP-binding site is contributed by 503 to 510; that stretch reads GRSGSGKS.

This sequence belongs to the ABC transporter superfamily. Protein-1 exporter (TC 3.A.1.109) family. As to quaternary structure, homodimer.

It is found in the cell inner membrane. The catalysed reaction is ATP + H2O + proteinSide 1 = ADP + phosphate + proteinSide 2.. Its function is as follows. Part of the ABC transporter complex LktBD involved in leukotoxin export. Transmembrane domains (TMD) form a pore in the inner membrane and the ATP-binding domain (NBD) is responsible for energy generation. This is Leukotoxin translocation ATP-binding protein LktB (lktB) from Mannheimia haemolytica (Pasteurella haemolytica).